The primary structure comprises 463 residues: Cysteine--tRNA ligase (463 aa).

Cys-27 contributes to the Zn(2+) binding site. Positions 29–39 match the 'HIGH' region motif; sequence ATVQGLPHIGH. Zn(2+)-binding residues include Cys-205, His-230, and Glu-234. A 'KMSKS' region motif is present at residues 261–265; it reads KMSKS. Residue Lys-264 coordinates ATP.

Belongs to the class-I aminoacyl-tRNA synthetase family. In terms of assembly, monomer. Zn(2+) serves as cofactor.

It is found in the cytoplasm. It carries out the reaction tRNA(Cys) + L-cysteine + ATP = L-cysteinyl-tRNA(Cys) + AMP + diphosphate. The polypeptide is Cysteine--tRNA ligase (Mycolicibacterium vanbaalenii (strain DSM 7251 / JCM 13017 / BCRC 16820 / KCTC 9966 / NRRL B-24157 / PYR-1) (Mycobacterium vanbaalenii)).